The following is a 345-amino-acid chain: Holliday junction branch migration complex subunit RuvB (345 aa).

Residues 1–183 (MTTQRLVSAA…FGIVHRLEFY (183 aa)) form a large ATPase domain (RuvB-L) region. Residues I22, R23, G64, K67, T68, T69, 130 to 132 (EDY), R173, Y183, and R220 contribute to the ATP site. T68 serves as a coordination point for Mg(2+). The segment at 184 to 254 (SVEELSRIVA…VAGKALEMLD (71 aa)) is small ATPAse domain (RuvB-S). The head domain (RuvB-H) stretch occupies residues 257 to 345 (PNGFDQSDRR…NVNEELFGDE (89 aa)). DNA is bound by residues R293, R312, and R317.

The protein belongs to the RuvB family. In terms of assembly, homohexamer. Forms an RuvA(8)-RuvB(12)-Holliday junction (HJ) complex. HJ DNA is sandwiched between 2 RuvA tetramers; dsDNA enters through RuvA and exits via RuvB. An RuvB hexamer assembles on each DNA strand where it exits the tetramer. Each RuvB hexamer is contacted by two RuvA subunits (via domain III) on 2 adjacent RuvB subunits; this complex drives branch migration. In the full resolvosome a probable DNA-RuvA(4)-RuvB(12)-RuvC(2) complex forms which resolves the HJ.

Its subcellular location is the cytoplasm. The catalysed reaction is ATP + H2O = ADP + phosphate + H(+). Its function is as follows. The RuvA-RuvB-RuvC complex processes Holliday junction (HJ) DNA during genetic recombination and DNA repair, while the RuvA-RuvB complex plays an important role in the rescue of blocked DNA replication forks via replication fork reversal (RFR). RuvA specifically binds to HJ cruciform DNA, conferring on it an open structure. The RuvB hexamer acts as an ATP-dependent pump, pulling dsDNA into and through the RuvAB complex. RuvB forms 2 homohexamers on either side of HJ DNA bound by 1 or 2 RuvA tetramers; 4 subunits per hexamer contact DNA at a time. Coordinated motions by a converter formed by DNA-disengaged RuvB subunits stimulates ATP hydrolysis and nucleotide exchange. Immobilization of the converter enables RuvB to convert the ATP-contained energy into a lever motion, pulling 2 nucleotides of DNA out of the RuvA tetramer per ATP hydrolyzed, thus driving DNA branch migration. The RuvB motors rotate together with the DNA substrate, which together with the progressing nucleotide cycle form the mechanistic basis for DNA recombination by continuous HJ branch migration. Branch migration allows RuvC to scan DNA until it finds its consensus sequence, where it cleaves and resolves cruciform DNA. The chain is Holliday junction branch migration complex subunit RuvB from Methylococcus capsulatus (strain ATCC 33009 / NCIMB 11132 / Bath).